Consider the following 336-residue polypeptide: Isopentenyl-diphosphate delta-isomerase (336 aa).

5–6 (RK) is a binding site for substrate. FMN is bound by residues 60 to 62 (AMT), Ser90, and Asn117. Gln147 lines the substrate pocket. Glu148 provides a ligand contact to Mg(2+). Residues Lys179, Ser204, Thr209, 253 to 255 (GVR), and 274 to 275 (SR) contribute to the FMN site.

It belongs to the IPP isomerase type 2 family. As to quaternary structure, homooctamer. Dimer of tetramers. FMN serves as cofactor. NADPH is required as a cofactor. The cofactor is Mg(2+).

It is found in the cytoplasm. It carries out the reaction isopentenyl diphosphate = dimethylallyl diphosphate. Involved in the biosynthesis of isoprenoids. Catalyzes the 1,3-allylic rearrangement of the homoallylic substrate isopentenyl (IPP) to its allylic isomer, dimethylallyl diphosphate (DMAPP). The sequence is that of Isopentenyl-diphosphate delta-isomerase from Streptococcus pneumoniae (strain ATCC BAA-255 / R6).